Reading from the N-terminus, the 269-residue chain is Putative pyruvate, phosphate dikinase regulatory protein (269 aa).

147 to 154 provides a ligand contact to ADP; the sequence is GVSRTSKT.

Belongs to the pyruvate, phosphate/water dikinase regulatory protein family. PDRP subfamily.

The catalysed reaction is N(tele)-phospho-L-histidyl/L-threonyl-[pyruvate, phosphate dikinase] + ADP = N(tele)-phospho-L-histidyl/O-phospho-L-threonyl-[pyruvate, phosphate dikinase] + AMP + H(+). The enzyme catalyses N(tele)-phospho-L-histidyl/O-phospho-L-threonyl-[pyruvate, phosphate dikinase] + phosphate + H(+) = N(tele)-phospho-L-histidyl/L-threonyl-[pyruvate, phosphate dikinase] + diphosphate. In terms of biological role, bifunctional serine/threonine kinase and phosphorylase involved in the regulation of the pyruvate, phosphate dikinase (PPDK) by catalyzing its phosphorylation/dephosphorylation. The sequence is that of Putative pyruvate, phosphate dikinase regulatory protein from Geotalea daltonii (strain DSM 22248 / JCM 15807 / FRC-32) (Geobacter daltonii).